Consider the following 2103-residue polypeptide: uncharacterized protein (2103 aa).

The span at 1–12 shows a compositional bias: low complexity; sequence MSVPGTPGAMEP. Residues 1–61 form a disordered region; sequence MSVPGTPGAM…DADDQEEEME (61 aa). Acidic residues predominate over residues 51 to 61; that stretch reads EDADDQEEEME. Residues 77–196 form the Bromo domain; sequence YELQQGYRIL…MMLEQKLALL (120 aa). Disordered regions lie at residues 730 to 750, 853 to 881, 933 to 956, 1224 to 1244, and 1770 to 1817; these read AKHK…ITKK, NREL…SIDS, QSKQ…AKLS, SASP…TLNG, and GATR…STSP. A compositionally biased stretch (basic and acidic residues) spans 865 to 877; the sequence is DLGKDSPKGEISK. Positions 1224–1234 are enriched in polar residues; sequence SASPTISSTGQ. Residues 1235–1244 are compositionally biased toward low complexity; that stretch reads PLSSTTTLNG. Polar residues predominate over residues 1773–1794; it reads RSVSISKRQSRTSLQFHSPGIS. A compositionally biased stretch (low complexity) spans 1795–1808; the sequence is TTVPTNVNTNKPQT.

Its subcellular location is the nucleus. This is an uncharacterized protein from Homo sapiens (Human).